Consider the following 1589-residue polypeptide: Pentafunctional AROM polypeptide (1589 aa).

A 3-dehydroquinate synthase region spans residues M1 to N384. NAD(+)-binding positions include D44–T46, E81–K84, G114–V116, and D119. R130 is a binding site for 7-phospho-2-dehydro-3-deoxy-D-arabino-heptonate. T139–T140 serves as a coordination point for NAD(+). 7-phospho-2-dehydro-3-deoxy-D-arabino-heptonate is bound by residues D146 and K152. K161 lines the NAD(+) pocket. N162 contacts 7-phospho-2-dehydro-3-deoxy-D-arabino-heptonate. NAD(+)-binding positions include F179 to T182 and N190. Residue E194 coordinates Zn(2+). 7-phospho-2-dehydro-3-deoxy-D-arabino-heptonate-binding positions include E194–K197 and K250. E260 functions as the Proton acceptor; for 3-dehydroquinate synthase activity in the catalytic mechanism. 7-phospho-2-dehydro-3-deoxy-D-arabino-heptonate is bound by residues R264 to N268 and H271. H271 contributes to the Zn(2+) binding site. H275 (proton acceptor; for 3-dehydroquinate synthase activity) is an active-site residue. 7-phospho-2-dehydro-3-deoxy-D-arabino-heptonate is bound by residues H287 and K356. H287 contributes to the Zn(2+) binding site. The tract at residues V397–A841 is EPSP synthase. Catalysis depends on C823, which acts as the For EPSP synthase activity. The shikimate kinase stretch occupies residues A861 to S1052. G867 to T874 is a binding site for ATP. The segment at L1053–D1273 is 3-dehydroquinase. Catalysis depends on H1176, which acts as the Proton acceptor; for 3-dehydroquinate dehydratase activity. The active-site Schiff-base intermediate with substrate; for 3-dehydroquinate dehydratase activity is the K1204. Positions P1286–G1589 are shikimate dehydrogenase.

In the N-terminal section; belongs to the sugar phosphate cyclases superfamily. Dehydroquinate synthase family. It in the 2nd section; belongs to the EPSP synthase family. The protein in the 3rd section; belongs to the shikimate kinase family. This sequence in the 4th section; belongs to the type-I 3-dehydroquinase family. In the C-terminal section; belongs to the shikimate dehydrogenase family. As to quaternary structure, homodimer. It depends on Zn(2+) as a cofactor.

The protein localises to the cytoplasm. The catalysed reaction is 7-phospho-2-dehydro-3-deoxy-D-arabino-heptonate = 3-dehydroquinate + phosphate. It catalyses the reaction 3-dehydroquinate = 3-dehydroshikimate + H2O. It carries out the reaction shikimate + NADP(+) = 3-dehydroshikimate + NADPH + H(+). The enzyme catalyses shikimate + ATP = 3-phosphoshikimate + ADP + H(+). The catalysed reaction is 3-phosphoshikimate + phosphoenolpyruvate = 5-O-(1-carboxyvinyl)-3-phosphoshikimate + phosphate. It functions in the pathway metabolic intermediate biosynthesis; chorismate biosynthesis; chorismate from D-erythrose 4-phosphate and phosphoenolpyruvate: step 2/7. The protein operates within metabolic intermediate biosynthesis; chorismate biosynthesis; chorismate from D-erythrose 4-phosphate and phosphoenolpyruvate: step 3/7. Its pathway is metabolic intermediate biosynthesis; chorismate biosynthesis; chorismate from D-erythrose 4-phosphate and phosphoenolpyruvate: step 4/7. It participates in metabolic intermediate biosynthesis; chorismate biosynthesis; chorismate from D-erythrose 4-phosphate and phosphoenolpyruvate: step 5/7. It functions in the pathway metabolic intermediate biosynthesis; chorismate biosynthesis; chorismate from D-erythrose 4-phosphate and phosphoenolpyruvate: step 6/7. Functionally, the AROM polypeptide catalyzes 5 consecutive enzymatic reactions in prechorismate polyaromatic amino acid biosynthesis. The chain is Pentafunctional AROM polypeptide from Coccidioides posadasii (strain C735) (Valley fever fungus).